We begin with the raw amino-acid sequence, 230 residues long: MEKIKVKEIFSNVYGVDLGDGLKRIATKSLAPGKRVYGEKLIYSENKEYRIWNPNKSKLGAAIINGLKKMPIKKGTKVLYLGASAGTTPSHVSDISEDTIVYAVEFAPRIMREFIDSCNERINLIPILGDANRPFEYSNIVGKVDVIFEDVAQPNQAEILVKNAKWFLNKDGYAMISIKARSIDVTKNPKEIFLEQKKILIEGGFDIVDEINIEPFEKDHIMFVGIWKGN.

Residues 87 to 88 (TT), 105 to 106 (EF), 130 to 131 (DA), and 150 to 153 (DVAQ) each bind S-adenosyl-L-methionine.

Belongs to the methyltransferase superfamily. Fibrillarin family. As to quaternary structure, interacts with nop5. Component of box C/D small ribonucleoprotein (sRNP) particles that contain rpl7ae, FlpA and nop5, plus a guide RNA.

Its function is as follows. Involved in pre-rRNA and tRNA processing. Utilizes the methyl donor S-adenosyl-L-methionine to catalyze the site-specific 2'-hydroxyl methylation of ribose moieties in rRNA and tRNA. Site specificity is provided by a guide RNA that base pairs with the substrate. Methylation occurs at a characteristic distance from the sequence involved in base pairing with the guide RNA. The sequence is that of Fibrillarin-like rRNA/tRNA 2'-O-methyltransferase from Methanococcus vannielii (strain ATCC 35089 / DSM 1224 / JCM 13029 / OCM 148 / SB).